The chain runs to 292 residues: Pyridoxal 5'-phosphate synthase subunit PdxS (292 aa).

A D-ribose 5-phosphate-binding site is contributed by aspartate 22. The Schiff-base intermediate with D-ribose 5-phosphate role is filled by lysine 79. D-ribose 5-phosphate is bound at residue glycine 151. Arginine 163 is a binding site for D-glyceraldehyde 3-phosphate. D-ribose 5-phosphate contacts are provided by residues glycine 212 and 233–234; that span reads GS.

Belongs to the PdxS/SNZ family. As to quaternary structure, in the presence of PdxT, forms a dodecamer of heterodimers.

The catalysed reaction is aldehydo-D-ribose 5-phosphate + D-glyceraldehyde 3-phosphate + L-glutamine = pyridoxal 5'-phosphate + L-glutamate + phosphate + 3 H2O + H(+). It functions in the pathway cofactor biosynthesis; pyridoxal 5'-phosphate biosynthesis. Its function is as follows. Catalyzes the formation of pyridoxal 5'-phosphate from ribose 5-phosphate (RBP), glyceraldehyde 3-phosphate (G3P) and ammonia. The ammonia is provided by the PdxT subunit. Can also use ribulose 5-phosphate and dihydroxyacetone phosphate as substrates, resulting from enzyme-catalyzed isomerization of RBP and G3P, respectively. In Thermoanaerobacter pseudethanolicus (strain ATCC 33223 / 39E) (Clostridium thermohydrosulfuricum), this protein is Pyridoxal 5'-phosphate synthase subunit PdxS.